We begin with the raw amino-acid sequence, 364 residues long: UDP-N-acetylglucosamine--N-acetylmuramyl-(pentapeptide) pyrophosphoryl-undecaprenol N-acetylglucosamine transferase (364 aa).

UDP-N-acetyl-alpha-D-glucosamine contacts are provided by residues 10–12, N124, R166, S196, and Q297; that span reads TGG.

The protein belongs to the glycosyltransferase 28 family. MurG subfamily.

The protein localises to the cell membrane. The enzyme catalyses di-trans,octa-cis-undecaprenyl diphospho-N-acetyl-alpha-D-muramoyl-L-alanyl-D-glutamyl-meso-2,6-diaminopimeloyl-D-alanyl-D-alanine + UDP-N-acetyl-alpha-D-glucosamine = di-trans,octa-cis-undecaprenyl diphospho-[N-acetyl-alpha-D-glucosaminyl-(1-&gt;4)]-N-acetyl-alpha-D-muramoyl-L-alanyl-D-glutamyl-meso-2,6-diaminopimeloyl-D-alanyl-D-alanine + UDP + H(+). It participates in cell wall biogenesis; peptidoglycan biosynthesis. Cell wall formation. Catalyzes the transfer of a GlcNAc subunit on undecaprenyl-pyrophosphoryl-MurNAc-pentapeptide (lipid intermediate I) to form undecaprenyl-pyrophosphoryl-MurNAc-(pentapeptide)GlcNAc (lipid intermediate II). The sequence is that of UDP-N-acetylglucosamine--N-acetylmuramyl-(pentapeptide) pyrophosphoryl-undecaprenol N-acetylglucosamine transferase from Thermoanaerobacter pseudethanolicus (strain ATCC 33223 / 39E) (Clostridium thermohydrosulfuricum).